We begin with the raw amino-acid sequence, 117 residues long: Ig heavy chain V region 345 (117 aa).

The signal sequence occupies residues Met1 to Cys19. Residues Glu20–Ser49 form a framework-1 region. A disulfide bridge connects residues Cys41 and Cys115. Residues Ser50–Ser54 are complementarity-determining-1. Positions Trp55–Ala68 are framework-2. The complementarity-determining-2 stretch occupies residues Tyr69–Gly85. A framework-3 region spans residues Arg86–Arg117.

The sequence is that of Ig heavy chain V region 345 from Mus musculus (Mouse).